Reading from the N-terminus, the 175-residue chain is Alpha-crystallin B chain (175 aa).

Position 1 is an N-acetylmethionine (methionine 1). Phosphoserine occurs at positions 19, 45, and 59. One can recognise a sHSP domain in the interval 56–164 (RAPSWIDTGL…PERTIPITRE (109 aa)). Zn(2+) is bound at residue histidine 83. Lysine 92 bears the N6-acetyllysine mark. The Zn(2+) site is built by histidine 104, glutamate 106, histidine 111, and histidine 119. Residues 145–175 (VNGPRKQVSGPERTIPITREEKPAVAAAPKK) are disordered. An N6-acetyllysine modification is found at lysine 166.

Belongs to the small heat shock protein (HSP20) family. In terms of assembly, heteromer composed of three CRYAA and one CRYAB subunits. Aggregates with homologous proteins, including the small heat shock protein HSPB1, to form large heteromeric complexes. Inter-subunit bridging via zinc ions enhances stability, which is crucial as there is no protein turn over in the lens. Interacts with HSPBAP1. Interacts with TTN/titin. Interacts with TMEM109; in the cellular response to DNA damage. Interacts with DES; binds rapidly during early stages of DES filament assembly and a reduced binding seen in the later stages. Interacts with TMED10; the interaction mediates the translocation from the cytoplasm into the ERGIC (endoplasmic reticulum-Golgi intermediate compartment) and thereby secretion. Interacts with ATP6V1A and with MTOR, forming a ternary complex. As to expression, abundantly expressed in the lens of the eye. Expressed in ventricular cardiomyocytes of the heart. Also expressed in skeletal muscle and the kidney.

It localises to the cytoplasm. It is found in the cytosol. Its subcellular location is the nucleus. The protein resides in the secreted. The protein localises to the lysosome. Functionally, may contribute to the transparency and refractive index of the lens. Has chaperone-like activity, preventing aggregation of various proteins under a wide range of stress conditions. In lens epithelial cells, stabilizes the ATP6V1A protein, preventing its degradation by the proteasome. In Mus musculus (Mouse), this protein is Alpha-crystallin B chain.